We begin with the raw amino-acid sequence, 507 residues long: ATP synthase subunit alpha (507 aa).

The interval V118–D141 is disordered. Residue G172–T179 participates in ATP binding.

This sequence belongs to the ATPase alpha/beta chains family. In terms of assembly, F-type ATPases have 2 components, CF(1) - the catalytic core - and CF(0) - the membrane proton channel. CF(1) has five subunits: alpha(3), beta(3), gamma(1), delta(1), epsilon(1). CF(0) has three main subunits: a(1), b(2) and c(9-12). The alpha and beta chains form an alternating ring which encloses part of the gamma chain. CF(1) is attached to CF(0) by a central stalk formed by the gamma and epsilon chains, while a peripheral stalk is formed by the delta and b chains.

Its subcellular location is the cell membrane. The catalysed reaction is ATP + H2O + 4 H(+)(in) = ADP + phosphate + 5 H(+)(out). Functionally, produces ATP from ADP in the presence of a proton gradient across the membrane. The alpha chain is a regulatory subunit. The chain is ATP synthase subunit alpha from Anoxybacillus flavithermus (strain DSM 21510 / WK1).